The following is a 160-amino-acid chain: Transcription elongation factor GreA (160 aa).

The protein belongs to the GreA/GreB family.

Its function is as follows. Necessary for efficient RNA polymerase transcription elongation past template-encoded arresting sites. The arresting sites in DNA have the property of trapping a certain fraction of elongating RNA polymerases that pass through, resulting in locked ternary complexes. Cleavage of the nascent transcript by cleavage factors such as GreA or GreB allows the resumption of elongation from the new 3'terminus. GreA releases sequences of 2 to 3 nucleotides. The chain is Transcription elongation factor GreA from Francisella tularensis subsp. tularensis (strain FSC 198).